A 196-amino-acid polypeptide reads, in one-letter code: Blue copper protein (196 aa).

The first 22 residues, 1–22 (MAGVFKTVTFLVLVFAAVVVFA), serve as a signal peptide directing secretion. Residues 23-125 (EDYDVGDDTE…GQKLSITVVA (103 aa)) form the Phytocyanin domain. His-66 provides a ligand contact to Cu cation. Cys-79 and Cys-113 are oxidised to a cystine. N-linked (GlcNAc...) asparagine glycosylation is present at Asn-98. Cu cation is bound by residues Cys-107, His-112, and Gln-117. Residues 133-173 (TPGAGATPAPGSTPSTGGTTPPTAGGTTTPSGSSGTTTPAG) form a disordered region. The segment covering 135–173 (GAGATPAPGSTPSTGGTTPPTAGGTTTPSGSSGTTTPAG) has biased composition (low complexity). Asn-174 carries GPI-anchor amidated asparagine lipidation. The propeptide at 175 to 196 (AASSLGGATFLVAFVSAVVALF) is removed in mature form.

It is found in the cell membrane. Its function is as follows. Probably acts as an electron carrier. This Arabidopsis thaliana (Mouse-ear cress) protein is Blue copper protein (BCB).